The sequence spans 225 residues: Small ribosomal subunit protein uS3 (225 aa).

One can recognise a KH type-2 domain in the interval 39–109; it reads IYRFFNKFTR…ELKLNIEVVN (71 aa).

The protein belongs to the universal ribosomal protein uS3 family. Part of the 30S ribosomal subunit. Forms a tight complex with proteins S10 and S14.

Functionally, binds the lower part of the 30S subunit head. Binds mRNA in the 70S ribosome, positioning it for translation. This chain is Small ribosomal subunit protein uS3, found in Mycoplasma mobile (strain ATCC 43663 / 163K / NCTC 11711) (Mesomycoplasma mobile).